A 1232-amino-acid polypeptide reads, in one-letter code: Anoctamin-8 (1232 aa).

The segment at 1-32 is disordered; it reads MAEAASGAGGTSLEGERGKRPPPEGEPAAPAS. Ala-2 is modified (N-acetylalanine). Residues 2 to 244 lie on the Extracellular side of the membrane; the sequence is AEAASGAGGT…DDICDYFGVK (243 aa). Residues 14–23 show a composition bias toward basic and acidic residues; sequence EGERGKRPPP. Residues 245–265 traverse the membrane as a helical segment; it reads IAMYFAWLGFYTSAMVYPAVF. At 266 to 281 the chain is on the cytoplasmic side; it reads GSVLYTFTEADQTSRD. A helical transmembrane segment spans residues 282-302; the sequence is VSCVVFALFNVIWSTLFLEEW. Over 303-356 the chain is Extracellular; it reads KRRGAELAYKWGTLDSPGEAVEEPRPQFRGVRRISPITRAEEFYYPPWKRLLFQ. Ser-318 bears the Phosphoserine mark. The chain crosses the membrane as a helical span at residues 357–377; sequence LLVSLPLCLACLVCVFLLMLG. Topologically, residues 378-400 are cytoplasmic; that stretch reads CFQLQELVLSVKGLPRLARFLPK. The helical transmembrane segment at 401 to 421 threads the bilayer; the sequence is VMLALLVSVSAEGYKKLAIWL. Topologically, residues 422-437 are extracellular; sequence NDMENYRLESAYEKHL. Residues 438 to 458 traverse the membrane as a helical segment; it reads IIKVVLFQFVNSYLSLFYIGF. Topologically, residues 459-750 are cytoplasmic; that stretch reads YLKDMERLKE…YEDTFQDYQE (292 aa). Positions 524 to 650 are disordered; sequence RRLEPQADEG…SPTMVEKGLE (127 aa). The span at 532–551 shows a compositional bias: gly residues; that stretch reads EGGGGGSGGGGRRCLSGGCG. A compositionally biased stretch (acidic residues) spans 582–606; the sequence is EEDEDDEEEEDEEEEEDEEEGEEGG. Residue Ser-669 is modified to Phosphoserine. The segment at 681 to 728 is disordered; that stretch reads RAGGEGRDQGPDGGPDPEPGSNSDSTRRQRRQNRSSWIDPPEEEHSPQ. The chain crosses the membrane as a helical span at residues 751–771; it reads MFVQFGYVVLFSSAFPLAALC. Residues 772–807 lie on the Extracellular side of the membrane; the sequence is ALVNNLIEIRSDAFKLCTGLQRPFGQRVESIGQWQK. Phosphoserine; by FAM20C is present on Ser-801. A helical transmembrane segment spans residues 808–828; it reads VMEAMGVLAIVVNCYLIGQCG. Topologically, residues 829 to 841 are cytoplasmic; sequence QLQRLFPWLSPEA. The helical transmembrane segment at 842–862 threads the bilayer; sequence AIVSVVVLEHFALLLKYLIHV. Topologically, residues 863 to 1232 are extracellular; it reads AIPDIPGWVA…QAVCWPSGWH (370 aa). 3 disordered regions span residues 888-970, 997-1152, and 1174-1232; these read RHER…GSLL, LAAA…WQWD, and PPCA…SGWH. A compositionally biased stretch (basic and acidic residues) spans 904–932; it reads RREEEERQRHAEHHARREHDSGGREEARA. 2 stretches are compositionally biased toward low complexity: residues 933-953 and 997-1006; these read EGSG…AKGS and LAAAGAGATT. Arg-1020 bears the Asymmetric dimethylarginine; alternate mark. Arg-1020 is subject to Omega-N-methylarginine; alternate. Residues 1031–1043 show a composition bias toward basic and acidic residues; that stretch reads KSPETRRDSERSH. The span at 1078–1087 shows a compositional bias: polar residues; that stretch reads TPSSGSSRVQ. Pro residues-rich tracts occupy residues 1130–1145 and 1197–1221; these read PAPP…PTPP and LPPP…PSPS.

The protein belongs to the anoctamin family. In terms of tissue distribution, expressed in embryonic stem cells, fetal brain and neural tissues.

It localises to the cell membrane. Its function is as follows. Does not exhibit calcium-activated chloride channel (CaCC) activity. The polypeptide is Anoctamin-8 (ANO8) (Homo sapiens (Human)).